Consider the following 77-residue polypeptide: MAKGQSLQDPFLNALRKEHIPVAIYLVNGIKLQGQIESFDQFVILLKNTVSQMVYKHAISTVVPARAIAAIPHVESD.

The region spanning 9-68 (DPFLNALRKEHIPVAIYLVNGIKLQGQIESFDQFVILLKNTVSQMVYKHAISTVVPARAI) is the Sm domain.

It belongs to the Hfq family. Homohexamer.

Its function is as follows. RNA chaperone that binds small regulatory RNA (sRNAs) and mRNAs to facilitate mRNA translational regulation in response to envelope stress, environmental stress and changes in metabolite concentrations. Also binds with high specificity to tRNAs. This is RNA-binding protein Hfq from Psychromonas ingrahamii (strain DSM 17664 / CCUG 51855 / 37).